The sequence spans 86 residues: DNA-directed RNA polymerase subunit Rpo6 (86 aa).

It belongs to the archaeal Rpo6/eukaryotic RPB6 RNA polymerase subunit family. Part of the RNA polymerase complex.

It localises to the cytoplasm. It catalyses the reaction RNA(n) + a ribonucleoside 5'-triphosphate = RNA(n+1) + diphosphate. Functionally, DNA-dependent RNA polymerase (RNAP) catalyzes the transcription of DNA into RNA using the four ribonucleoside triphosphates as substrates. The protein is DNA-directed RNA polymerase subunit Rpo6 of Sulfurisphaera tokodaii (strain DSM 16993 / JCM 10545 / NBRC 100140 / 7) (Sulfolobus tokodaii).